Reading from the N-terminus, the 711-residue chain is Origin recognition complex subunit 3 (711 aa).

2 positions are modified to phosphoserine: serine 23 and serine 515.

Belongs to the ORC3 family. As to quaternary structure, component of ORC, a complex composed of at least 6 subunits: ORC1, ORC2, ORC3, ORC4, ORC5 and ORC6. ORC is regulated in a cell-cycle dependent manner. It is sequentially assembled at the exit from anaphase of mitosis and disassembled as cells enter S phase. In terms of processing, multi-mono-ubiquitinated by OBI1; ubiquitination is important for efficient DNA replication origin site activation. Ubiquitination levels are low in mitotic and early G1-phAse cells and are induced in late G1-/early S-phase, peaking in S-phase and decrease toward the end of the cell cycle.

Its subcellular location is the nucleus. It localises to the chromosome. Its function is as follows. Component of the origin recognition complex (ORC) that binds origins of replication. DNA-binding is ATP-dependent. The specific DNA sequences that define origins of replication have not been identified yet. ORC is required to assemble the pre-replication complex necessary to initiate DNA replication. Binds histone H3 and H4 trimethylation marks H3K9me3, H3K27me3 and H4K20me3. The protein is Origin recognition complex subunit 3 (Orc3) of Rattus norvegicus (Rat).